The chain runs to 612 residues: Indole-3-acetic acid-amido synthetase GH3.5 (612 aa).

This sequence belongs to the IAA-amido conjugating enzyme family.

Its function is as follows. Catalyzes the synthesis of indole-3-acetic acid (IAA)-amino acid conjugates, providing a mechanism for the plant to cope with the presence of excess auxin. Strongly reactive with Glu, Gln, Trp, Asp, Ala, Leu, Phe, Gly, Tyr, Met, Ile and Val. Little or no product formation with His, Ser, Thr, Arg, Lys, or Cys. Also active on pyruvic and butyric acid analogs of IAA, PAA and the synthetic auxin naphthaleneacetic acid (NAA). The two chlorinated synthetic auxin herbicides 2,4-D and 3,6-dichloro-o-anisic acid (dicamba) cannot be used as substrates. The polypeptide is Indole-3-acetic acid-amido synthetase GH3.5 (GH3.5) (Arabidopsis thaliana (Mouse-ear cress)).